A 194-amino-acid polypeptide reads, in one-letter code: 2,4-dinitrotoluene dioxygenase system, small oxygenase component (194 aa).

This sequence belongs to the bacterial ring-hydroxylating dioxygenase beta subunit family. In terms of assembly, the 2,4-dinitrotoluene dioxygenase (DNTDO) multicomponent enzyme system is composed of an electron transfer component and a dioxygenase component (iron sulfur protein (ISP)). The electron transfer component is composed of a ferredoxin reductase (DntAa) and a ferredoxin (DntAb), and the dioxygenase component is formed of a large alpha subunit (DntAc) and a small beta subunit (DntAd).

Component of the 2,4-dinitrotoluene dioxygenase (DNTDO) multicomponent enzyme system which catalyzes the incorporation of both atoms of molecular oxygen into 2,4-dinitrotoluene (DNT) to form 4-methyl-5-nitrocatechol (MNC) and nitrite. The beta subunit seems to have a structural role in the holoenzyme. Also able to convert naphthalene to cis-(1R,2S)-dihydroxy-1,2-dihydronaphthalene. The polypeptide is 2,4-dinitrotoluene dioxygenase system, small oxygenase component (Burkholderia sp. (strain RASC)).